The sequence spans 300 residues: Ribosomal RNA small subunit methyltransferase H (300 aa).

S-adenosyl-L-methionine is bound by residues glycine 46–histidine 48, aspartate 65, phenylalanine 92, aspartate 107, and glutamine 114.

The protein belongs to the methyltransferase superfamily. RsmH family.

The protein resides in the cytoplasm. It carries out the reaction cytidine(1402) in 16S rRNA + S-adenosyl-L-methionine = N(4)-methylcytidine(1402) in 16S rRNA + S-adenosyl-L-homocysteine + H(+). Functionally, specifically methylates the N4 position of cytidine in position 1402 (C1402) of 16S rRNA. The chain is Ribosomal RNA small subunit methyltransferase H from Prochlorococcus marinus (strain MIT 9515).